Here is a 927-residue protein sequence, read N- to C-terminus: Isoleucine--tRNA ligase (927 aa).

The short motif at 57 to 67 (PFANGNIHMGH) is the 'HIGH' region element. Position 553 (Glu-553) interacts with L-isoleucyl-5'-AMP. A 'KMSKS' region motif is present at residues 594–598 (KMSKS). Residue Lys-597 coordinates ATP. 4 residues coordinate Zn(2+): Cys-886, Cys-889, Cys-906, and Cys-909.

The protein belongs to the class-I aminoacyl-tRNA synthetase family. IleS type 1 subfamily. Monomer. The cofactor is Zn(2+).

It is found in the cytoplasm. The enzyme catalyses tRNA(Ile) + L-isoleucine + ATP = L-isoleucyl-tRNA(Ile) + AMP + diphosphate. Functionally, catalyzes the attachment of isoleucine to tRNA(Ile). As IleRS can inadvertently accommodate and process structurally similar amino acids such as valine, to avoid such errors it has two additional distinct tRNA(Ile)-dependent editing activities. One activity is designated as 'pretransfer' editing and involves the hydrolysis of activated Val-AMP. The other activity is designated 'posttransfer' editing and involves deacylation of mischarged Val-tRNA(Ile). The chain is Isoleucine--tRNA ligase from Lactobacillus acidophilus (strain ATCC 700396 / NCK56 / N2 / NCFM).